The sequence spans 429 residues: Serine hydroxymethyltransferase (429 aa).

(6S)-5,6,7,8-tetrahydrofolate contacts are provided by residues L128 and 132–134; that span reads GHL. K237 is subject to N6-(pyridoxal phosphate)lysine.

This sequence belongs to the SHMT family. In terms of assembly, homodimer. Requires pyridoxal 5'-phosphate as cofactor.

It localises to the cytoplasm. It carries out the reaction (6R)-5,10-methylene-5,6,7,8-tetrahydrofolate + glycine + H2O = (6S)-5,6,7,8-tetrahydrofolate + L-serine. It functions in the pathway one-carbon metabolism; tetrahydrofolate interconversion. The protein operates within amino-acid biosynthesis; glycine biosynthesis; glycine from L-serine: step 1/1. In terms of biological role, catalyzes the reversible interconversion of serine and glycine with tetrahydrofolate (THF) serving as the one-carbon carrier. This reaction serves as the major source of one-carbon groups required for the biosynthesis of purines, thymidylate, methionine, and other important biomolecules. Also exhibits THF-independent aldolase activity toward beta-hydroxyamino acids, producing glycine and aldehydes, via a retro-aldol mechanism. The protein is Serine hydroxymethyltransferase of Caulobacter vibrioides (strain ATCC 19089 / CIP 103742 / CB 15) (Caulobacter crescentus).